Consider the following 395-residue polypeptide: S-adenosylmethionine synthase (395 aa).

An ATP-binding site is contributed by histidine 14. Position 16 (aspartate 16) interacts with Mg(2+). Residue glutamate 42 coordinates K(+). L-methionine-binding residues include glutamate 55 and glutamine 98. A flexible loop region spans residues 98 to 108; that stretch reads QSPDIAMGVNK. ATP is bound by residues 174-176, 240-241, aspartate 249, 255-256, alanine 272, and lysine 276; these read DGK, RF, and RK. Aspartate 249 is an L-methionine binding site. Lysine 280 lines the L-methionine pocket.

The protein belongs to the AdoMet synthase family. Homotetramer; dimer of dimers. Requires Mg(2+) as cofactor. It depends on K(+) as a cofactor.

It localises to the cytoplasm. It carries out the reaction L-methionine + ATP + H2O = S-adenosyl-L-methionine + phosphate + diphosphate. It functions in the pathway amino-acid biosynthesis; S-adenosyl-L-methionine biosynthesis; S-adenosyl-L-methionine from L-methionine: step 1/1. Functionally, catalyzes the formation of S-adenosylmethionine (AdoMet) from methionine and ATP. The overall synthetic reaction is composed of two sequential steps, AdoMet formation and the subsequent tripolyphosphate hydrolysis which occurs prior to release of AdoMet from the enzyme. This Caldanaerobacter subterraneus subsp. tengcongensis (strain DSM 15242 / JCM 11007 / NBRC 100824 / MB4) (Thermoanaerobacter tengcongensis) protein is S-adenosylmethionine synthase.